The primary structure comprises 355 residues: Phosphoribosylformylglycinamidine cyclo-ligase (355 aa).

The protein belongs to the AIR synthase family.

Its subcellular location is the cytoplasm. It carries out the reaction 2-formamido-N(1)-(5-O-phospho-beta-D-ribosyl)acetamidine + ATP = 5-amino-1-(5-phospho-beta-D-ribosyl)imidazole + ADP + phosphate + H(+). Its pathway is purine metabolism; IMP biosynthesis via de novo pathway; 5-amino-1-(5-phospho-D-ribosyl)imidazole from N(2)-formyl-N(1)-(5-phospho-D-ribosyl)glycinamide: step 2/2. The chain is Phosphoribosylformylglycinamidine cyclo-ligase from Hamiltonella defensa subsp. Acyrthosiphon pisum (strain 5AT).